Here is a 423-residue protein sequence, read N- to C-terminus: Probable efflux pump mfs2 (423 aa).

The next 11 membrane-spanning stretches (helical) occupy residues Thr-21–Val-41, Ser-49–His-69, Leu-79–Val-99, Leu-111–Val-131, Trp-138–His-158, Ala-220–Leu-240, Tyr-256–Tyr-278, Ile-295–Ala-315, His-319–Phe-339, Ala-360–Leu-380, and Leu-392–Trp-411.

This sequence belongs to the major facilitator superfamily.

Its subcellular location is the membrane. Probable efflux pump; part of the gene cluster 27 that mediates the biosynthesis of asparasone A, a sclerotium-specific anthraquinone pigment important for sclerotial survival. The chain is Probable efflux pump mfs2 from Aspergillus flavus (strain ATCC 200026 / FGSC A1120 / IAM 13836 / NRRL 3357 / JCM 12722 / SRRC 167).